Here is a 125-residue protein sequence, read N- to C-terminus: uncharacterized protein (125 aa).

The chain crosses the membrane as a helical span at residues 96–113 (LFMMSIVSSYVCYITVLL).

It localises to the membrane. This is an uncharacterized protein from Saccharomyces cerevisiae (strain ATCC 204508 / S288c) (Baker's yeast).